A 670-amino-acid polypeptide reads, in one-letter code: Solute carrier organic anion transporter family member 1A3 (670 aa).

The Cytoplasmic portion of the chain corresponds to 1–20; it reads MGDLEKGAATHGAGCFAKIK. A helical transmembrane segment spans residues 21-40; the sequence is VFLMALTCAYVSKSLSGTFM. Topologically, residues 41 to 59 are extracellular; sequence SSMLTQIERQFGIPTAIVG. A helical membrane pass occupies residues 60–80; the sequence is FINGSFEIGNLLLIIFVSYFG. Topologically, residues 81–86 are cytoplasmic; it reads MKLHRP. A helical transmembrane segment spans residues 87–111; sequence IVIGVGCAVMGLGCFIISLPHFLMG. Residues 112–155 are Extracellular-facing; that stretch reads RYEYETTILPTSNLSSNSFLCMENQTQTLNPAQDPAECVKEVKS. Residues Asn124 and Asn135 are each glycosylated (N-linked (GlcNAc...) asparagine). A helical membrane pass occupies residues 156–184; it reads LMWIYVLVGNIIRGIGETPIMPLGVSYIE. At 185–203 the chain is on the cytoplasmic side; sequence NFAKSENSPLYIGILETGK. Residues 204 to 224 traverse the membrane as a helical segment; the sequence is MIGPIFGLLLGSFCASIYVDT. Over 225–242 the chain is Extracellular; the sequence is GSVNTDDLTITPTDIRWV. The helical transmembrane segment at 243-267 threads the bilayer; the sequence is GAWWIGFLVCAGVNILISIPFFFFP. At 268–311 the chain is on the cytoplasmic side; it reads KTLPKEGLQENVDGTENAKEESTEKRPRKKNRGITKDFFPFLKS. The segment at 277–296 is disordered; it reads ENVDGTENAKEESTEKRPRK. A compositionally biased stretch (basic and acidic residues) spans 283–292; the sequence is ENAKEESTEK. A helical membrane pass occupies residues 312–333; that stretch reads PVLQPDLHAVHPYKVLQVNAFN. At 334-353 the chain is on the extracellular side; sequence IYFSFLPKYLENQYGKSTAE. Residues 354–377 traverse the membrane as a helical segment; sequence VIFLMGVYNLPAICIGYLIAGFMM. Residues 378–381 lie on the Cytoplasmic side of the membrane; the sequence is KKFK. The helical transmembrane segment at 382-405 threads the bilayer; that stretch reads ITVKTAAFLAFCLSLSEYSFGFCN. At 406-513 the chain is on the extracellular side; it reads FLITCDNVPV…PECTNKLQYL (108 aa). In terms of domain architecture, Kazal-like spans 433–488; it reads NNVLADCNTRCSCLTKTWDPVCGDNGLAYMSACLAGCEKSVGTGTNMVFHNCSCIQ. 3 disulfide bridges follow: Cys439-Cys469, Cys445-Cys465, and Cys454-Cys486. N-linked (GlcNAc...) asparagine glycosylation is found at Asn483 and Asn492. The helical transmembrane segment at 514–536 threads the bilayer; the sequence is LILSGFLSILYSFAAIPGYMVFL. Over 537-545 the chain is Cytoplasmic; sequence RCIKSEEKS. The helical transmembrane segment at 546–571 threads the bilayer; it reads LGIGIHAFCIRVFAGIPAPIYFGALI. Residues 572 to 605 lie on the Extracellular side of the membrane; sequence DRTCLHWGTQKCGAPGACRMYDINSFRRIYLGMS. A helical transmembrane segment spans residues 606-623; that stretch reads AALRGSSYLPAFVIVILT. At 624 to 670 the chain is on the cytoplasmic side; the sequence is RKFSLPGKINSSEMEIAEMKLTEKESQCTDVHRNPKFKNDGELKTKL.

The protein belongs to the organo anion transporter (TC 2.A.60) family. In terms of tissue distribution, all isoforms are detected in kidney, and many are kidney specific. Isoforms 2 and 13 are also detected in liver. Isoforms 4 and 9/K4 are ubiquitous, but isoform 9/K13 is kidney specific. Isoforms 5 and 14 are detected in all tissues tested, with the exception of pancreas and spleen. Isoforms 11 and 15 are detected in kidney, pancreas and testis. Isoform 7 is detected in kidney, liver, testis and spleen.

The protein resides in the cell membrane. In terms of biological role, mediates the Na(+)-independent transport of organic anions such as methotrexate, taurocholate, folate and prostaglandin E2. May contribute to renal secretion and/or reabsorption of hydrophobic anionic compounds. Mediates renal clearance of methotrexate from the blood. This is Solute carrier organic anion transporter family member 1A3 (Slco1a3) from Rattus norvegicus (Rat).